Reading from the N-terminus, the 328-residue chain is Tyrosine--tRNA ligase (328 aa).

Residue Y33 participates in L-tyrosine binding. Positions P38 to H46 match the 'HIGH' region motif. Residues Y154, Q158, D161, and Q176 each contribute to the L-tyrosine site. The tract at residues E193–R227 is disordered. The 'KMSKS' region motif lies at K212–S216. S215 contacts ATP.

This sequence belongs to the class-I aminoacyl-tRNA synthetase family. TyrS type 3 subfamily. As to quaternary structure, homodimer.

Its subcellular location is the cytoplasm. It carries out the reaction tRNA(Tyr) + L-tyrosine + ATP = L-tyrosyl-tRNA(Tyr) + AMP + diphosphate + H(+). Its function is as follows. Catalyzes the attachment of tyrosine to tRNA(Tyr) in a two-step reaction: tyrosine is first activated by ATP to form Tyr-AMP and then transferred to the acceptor end of tRNA(Tyr). The polypeptide is Tyrosine--tRNA ligase (Halorubrum lacusprofundi (strain ATCC 49239 / DSM 5036 / JCM 8891 / ACAM 34)).